The primary structure comprises 91 residues: Acylphosphatase (91 aa).

Residues 3 to 91 (CLRAIVKGKV…ANYSDFRIKH (89 aa)) enclose the Acylphosphatase-like domain. Catalysis depends on residues R18 and N36.

The protein belongs to the acylphosphatase family.

It carries out the reaction an acyl phosphate + H2O = a carboxylate + phosphate + H(+). The chain is Acylphosphatase (acyP) from Dehalococcoides mccartyi (strain ATCC BAA-2100 / JCM 16839 / KCTC 5957 / BAV1).